A 424-amino-acid polypeptide reads, in one-letter code: Proline--tRNA ligase (424 aa).

The protein belongs to the class-II aminoacyl-tRNA synthetase family. ProS type 2 subfamily. As to quaternary structure, homodimer.

The protein localises to the cytoplasm. It carries out the reaction tRNA(Pro) + L-proline + ATP = L-prolyl-tRNA(Pro) + AMP + diphosphate. In terms of biological role, catalyzes the attachment of proline to tRNA(Pro) in a two-step reaction: proline is first activated by ATP to form Pro-AMP and then transferred to the acceptor end of tRNA(Pro). This is Proline--tRNA ligase from Ehrlichia chaffeensis (strain ATCC CRL-10679 / Arkansas).